The sequence spans 122 residues: Large ribosomal subunit protein uL14 (122 aa).

The protein belongs to the universal ribosomal protein uL14 family. Part of the 50S ribosomal subunit. Forms a cluster with proteins L3 and L19. In the 70S ribosome, L14 and L19 interact and together make contacts with the 16S rRNA in bridges B5 and B8.

In terms of biological role, binds to 23S rRNA. Forms part of two intersubunit bridges in the 70S ribosome. The protein is Large ribosomal subunit protein uL14 of Colwellia psychrerythraea (strain 34H / ATCC BAA-681) (Vibrio psychroerythus).